The following is a 624-amino-acid chain: tRNA uridine 5-carboxymethylaminomethyl modification enzyme MnmG (624 aa).

14 to 19 is a binding site for FAD; sequence GAGHAG. Residue 273 to 287 participates in NAD(+) binding; it reads GTRYCPSFEDKVVRF.

The protein belongs to the MnmG family. As to quaternary structure, homodimer. Heterotetramer of two MnmE and two MnmG subunits. The cofactor is FAD.

It localises to the cytoplasm. In terms of biological role, NAD-binding protein involved in the addition of a carboxymethylaminomethyl (cmnm) group at the wobble position (U34) of certain tRNAs, forming tRNA-cmnm(5)s(2)U34. This chain is tRNA uridine 5-carboxymethylaminomethyl modification enzyme MnmG, found in Syntrophomonas wolfei subsp. wolfei (strain DSM 2245B / Goettingen).